The chain runs to 367 residues: Ferrochelatase (367 aa).

Positions 213 and 294 each coordinate Fe cation.

This sequence belongs to the ferrochelatase family.

It localises to the cytoplasm. It catalyses the reaction heme b + 2 H(+) = protoporphyrin IX + Fe(2+). Its pathway is porphyrin-containing compound metabolism; protoheme biosynthesis; protoheme from protoporphyrin-IX: step 1/1. Functionally, catalyzes the ferrous insertion into protoporphyrin IX. The protein is Ferrochelatase of Dechloromonas aromatica (strain RCB).